The primary structure comprises 397 residues: Elongation factor Tu (397 aa).

Positions 10–206 constitute a tr-type G domain; the sequence is KPHVNIGTIG…AVDTYIPTPE (197 aa). The interval 19-26 is G1; it reads GHVDHGKT. 19–26 serves as a coordination point for GTP; the sequence is GHVDHGKT. Threonine 26 lines the Mg(2+) pocket. The segment at 60–64 is G2; the sequence is GITIN. A G3 region spans residues 81 to 84; that stretch reads DCPG. GTP-binding positions include 81 to 85 and 136 to 139; these read DCPGH and NKSD. The tract at residues 136 to 139 is G4; it reads NKSD. The interval 174-176 is G5; sequence SAL.

It belongs to the TRAFAC class translation factor GTPase superfamily. Classic translation factor GTPase family. EF-Tu/EF-1A subfamily. In terms of assembly, monomer.

It is found in the cytoplasm. It catalyses the reaction GTP + H2O = GDP + phosphate + H(+). Functionally, GTP hydrolase that promotes the GTP-dependent binding of aminoacyl-tRNA to the A-site of ribosomes during protein biosynthesis. The sequence is that of Elongation factor Tu from Clostridium kluyveri (strain ATCC 8527 / DSM 555 / NBRC 12016 / NCIMB 10680 / K1).